Here is a 456-residue protein sequence, read N- to C-terminus: Methylenetetrahydrofolate--tRNA-(uracil-5-)-methyltransferase TrmFO (456 aa).

FAD is bound at residue 11-16; the sequence is GAGLAG.

Belongs to the MnmG family. TrmFO subfamily. FAD is required as a cofactor.

Its subcellular location is the cytoplasm. It catalyses the reaction uridine(54) in tRNA + (6R)-5,10-methylene-5,6,7,8-tetrahydrofolate + NADH + H(+) = 5-methyluridine(54) in tRNA + (6S)-5,6,7,8-tetrahydrofolate + NAD(+). The enzyme catalyses uridine(54) in tRNA + (6R)-5,10-methylene-5,6,7,8-tetrahydrofolate + NADPH + H(+) = 5-methyluridine(54) in tRNA + (6S)-5,6,7,8-tetrahydrofolate + NADP(+). In terms of biological role, catalyzes the folate-dependent formation of 5-methyl-uridine at position 54 (M-5-U54) in all tRNAs. This Synechococcus sp. (strain CC9605) protein is Methylenetetrahydrofolate--tRNA-(uracil-5-)-methyltransferase TrmFO.